The primary structure comprises 168 residues: Heat shock protein beta-9 (168 aa).

Residues 1–12 show a composition bias toward polar residues; that stretch reads MQRVGSSFSTGQ. Disordered stretches follow at residues 1 to 25, 83 to 104, and 129 to 168; these read MQRV…SRCP, TGQR…EQSV, and LWLR…VKNP. Residues 38-151 form the sHSP domain; that stretch reads LPVRLLRDEV…EAQTGQSQKP (114 aa). The span at 86-104 shows a compositional bias: basic and acidic residues; the sequence is RQHESNDPSRGRYRMEQSV. The span at 158–168 shows a compositional bias: polar residues; that stretch reads SSLQNESVKNP.

Belongs to the small heat shock protein (HSP20) family. In terms of tissue distribution, testis specific.

It localises to the cytoplasm. It is found in the nucleus. The polypeptide is Heat shock protein beta-9 (Hspb9) (Mus musculus (Mouse)).